The primary structure comprises 177 residues: Large ribosomal subunit protein uL6 (177 aa).

This sequence belongs to the universal ribosomal protein uL6 family. Part of the 50S ribosomal subunit.

This protein binds to the 23S rRNA, and is important in its secondary structure. It is located near the subunit interface in the base of the L7/L12 stalk, and near the tRNA binding site of the peptidyltransferase center. This chain is Large ribosomal subunit protein uL6, found in Histophilus somni (strain 2336) (Haemophilus somnus).